Here is a 175-residue protein sequence, read N- to C-terminus: Zinc metalloproteinase-disintegrin-like catroriarin (175 aa).

The region spanning 1–63 (NPCCDAATCK…ECPADVFHKN (63 aa)) is the Disintegrin domain. 9 disulfide bridges follow: Cys3–Cys26, Cys17–Cys23, Cys22–Cys48, Cys35–Cys55, Cys42–Cys74, Cys67–Cys79, Cys101–Cys147, Cys114–Cys124, and Cys131–Cys171. The D/ECD-tripeptide motif lies at 41–43 (ECD). Ca(2+) contacts are provided by Asp43, Pro44, Glu46, Asp58, and Val59.

This sequence belongs to the venom metalloproteinase (M12B) family. P-III subfamily. P-IIIa sub-subfamily. As to quaternary structure, monomer. It depends on Zn(2+) as a cofactor. Glycosylated. As to expression, expressed by the venom gland.

The protein localises to the secreted. Its function is as follows. Snake venom metalloproteinase that impairs hemostasis in the envenomed animal. This is Zinc metalloproteinase-disintegrin-like catroriarin from Crotalus atrox (Western diamondback rattlesnake).